Here is a 231-residue protein sequence, read N- to C-terminus: 7-cyano-7-deazaguanine synthase (231 aa).

8-18 contacts ATP; it reads FSGGQDSTTCL. Zn(2+) is bound by residues Cys-188, Cys-197, Cys-200, and Cys-203.

This sequence belongs to the QueC family. Requires Zn(2+) as cofactor.

The catalysed reaction is 7-carboxy-7-deazaguanine + NH4(+) + ATP = 7-cyano-7-deazaguanine + ADP + phosphate + H2O + H(+). The protein operates within purine metabolism; 7-cyano-7-deazaguanine biosynthesis. Catalyzes the ATP-dependent conversion of 7-carboxy-7-deazaguanine (CDG) to 7-cyano-7-deazaguanine (preQ(0)). The sequence is that of 7-cyano-7-deazaguanine synthase from Escherichia coli O157:H7.